Consider the following 355-residue polypeptide: Tryptophan--tRNA ligase (355 aa).

Residues 13–15 (QPT) and 21–22 (GN) contribute to the ATP site. The 'HIGH' region motif lies at 14 to 22 (PTGNLHLGN). D137 is a binding site for L-tryptophan. ATP contacts are provided by residues 149 to 151 (GED), I208, and 217 to 221 (KMSKS). The 'KMSKS' region motif lies at 217–221 (KMSKS).

The protein belongs to the class-I aminoacyl-tRNA synthetase family. As to quaternary structure, homodimer.

The protein localises to the cytoplasm. The enzyme catalyses tRNA(Trp) + L-tryptophan + ATP = L-tryptophyl-tRNA(Trp) + AMP + diphosphate + H(+). Catalyzes the attachment of tryptophan to tRNA(Trp). In Mesorhizobium japonicum (strain LMG 29417 / CECT 9101 / MAFF 303099) (Mesorhizobium loti (strain MAFF 303099)), this protein is Tryptophan--tRNA ligase.